An 81-amino-acid chain; its full sequence is Probable antimicrobial peptide Con13 (81 aa).

An N-terminal signal peptide occupies residues 1–22 (MNRKLLLVFLVVAMLVMQPAEA). Residues 66-81 (EAGQIPFDEFMDVLYS) constitute a propeptide that is removed on maturation.

Belongs to the non-disulfide-bridged peptide (NDBP) superfamily. Long chain multifunctional peptide (group 2) family. Expressed by the venom gland.

It is found in the secreted. Its subcellular location is the target cell membrane. Functionally, at high concentrations, acts as a pore former in cellular membranes and causes the leakage of the cells. At submicromolar concentrations, degranulates granulocytes and has a weak hemolytic activity against human erythrocytes. Also strongly inhibits the production of superoxide anions. Has a strong antibacterial activity against Gram-negative bacteria but is less active against Gram-positive bacteria. Also has antifungal activity. The protein is Probable antimicrobial peptide Con13 of Opisthacanthus cayaporum (South American scorpion).